We begin with the raw amino-acid sequence, 212 residues long: Pyrrolidone-carboxylate peptidase (212 aa).

Catalysis depends on residues Glu-80, Cys-143, and His-165.

Belongs to the peptidase C15 family. Homotetramer.

The protein localises to the cytoplasm. It carries out the reaction Release of an N-terminal pyroglutamyl group from a polypeptide, the second amino acid generally not being Pro.. Its function is as follows. Removes 5-oxoproline from various penultimate amino acid residues except L-proline. The protein is Pyrrolidone-carboxylate peptidase of Vibrio campbellii (strain ATCC BAA-1116).